We begin with the raw amino-acid sequence, 571 residues long: Proline--tRNA ligase (571 aa).

The protein belongs to the class-II aminoacyl-tRNA synthetase family. ProS type 1 subfamily. In terms of assembly, homodimer.

Its subcellular location is the cytoplasm. The catalysed reaction is tRNA(Pro) + L-proline + ATP = L-prolyl-tRNA(Pro) + AMP + diphosphate. Catalyzes the attachment of proline to tRNA(Pro) in a two-step reaction: proline is first activated by ATP to form Pro-AMP and then transferred to the acceptor end of tRNA(Pro). As ProRS can inadvertently accommodate and process non-cognate amino acids such as alanine and cysteine, to avoid such errors it has two additional distinct editing activities against alanine. One activity is designated as 'pretransfer' editing and involves the tRNA(Pro)-independent hydrolysis of activated Ala-AMP. The other activity is designated 'posttransfer' editing and involves deacylation of mischarged Ala-tRNA(Pro). The misacylated Cys-tRNA(Pro) is not edited by ProRS. This is Proline--tRNA ligase from Vibrio atlanticus (strain LGP32) (Vibrio splendidus (strain Mel32)).